Here is a 224-residue protein sequence, read N- to C-terminus: UPF0758 protein Csal_2972 (224 aa).

In terms of domain architecture, MPN spans 102–224; that stretch reads ALTSPTLVRR…VVSFAERGWL (123 aa). Residues H173, H175, and D186 each contribute to the Zn(2+) site. A JAMM motif motif is present at residues 173 to 186; that stretch reads HNHPSGVAEPSDAD.

The protein belongs to the UPF0758 family.

The chain is UPF0758 protein Csal_2972 from Chromohalobacter salexigens (strain ATCC BAA-138 / DSM 3043 / CIP 106854 / NCIMB 13768 / 1H11).